Reading from the N-terminus, the 294-residue chain is MTSRLRIAVQSKGRLAEGGMDLLKRCGLRFAYGRDKLHQRAENMPVDLMLVRDDDIPNFVGSGACDYGIVGENVLAEEQAAGGRARELEVALRLGFAGCTLKLAAPDDGSIRTVADLEGKAVATSYPALTAQYIADRGVKAEIVEMRGSVEVAPRLRIADAICDLVSSGATLQANGLKAFETVLRSEAVLIRRKSGRADDTDAIANILMRRSEGVIASSQTKYIMLNAPTDRLGAIRALLPGADAPTIAKVAGREDVVAVHAVCRERVFWETLEALEKEGARAILVLPIEKMLA.

The protein belongs to the ATP phosphoribosyltransferase family. Long subfamily. Mg(2+) is required as a cofactor.

It is found in the cytoplasm. The catalysed reaction is 1-(5-phospho-beta-D-ribosyl)-ATP + diphosphate = 5-phospho-alpha-D-ribose 1-diphosphate + ATP. Its pathway is amino-acid biosynthesis; L-histidine biosynthesis; L-histidine from 5-phospho-alpha-D-ribose 1-diphosphate: step 1/9. Its activity is regulated as follows. Feedback inhibited by histidine. Its function is as follows. Catalyzes the condensation of ATP and 5-phosphoribose 1-diphosphate to form N'-(5'-phosphoribosyl)-ATP (PR-ATP). Has a crucial role in the pathway because the rate of histidine biosynthesis seems to be controlled primarily by regulation of HisG enzymatic activity. The sequence is that of ATP phosphoribosyltransferase from Maricaulis maris (strain MCS10) (Caulobacter maris).